We begin with the raw amino-acid sequence, 588 residues long: Cation channel sperm-associated protein 2 (588 aa).

The Cytoplasmic segment spans residues 1-106; it reads MAQEQGHFQL…LWAGWVLDSS (106 aa). The chain crosses the membrane as a helical span at residues 107–129; it reads VFSKFIISLIFLNTFVLMVEIEL. Over 130-138 the chain is Extracellular; the sequence is MESTNTALW. Residues 139 to 164 traverse the membrane as a helical segment; it reads PVKLALEVADWFILLSFIVEILLMWL. Residues 165–173 are Cytoplasmic-facing; sequence ASFSLFWKD. A helical transmembrane segment spans residues 174–198; the sequence is AWNVFDFFVTLLSLLPELVVLLGVP. Over 199-201 the chain is Extracellular; the sequence is AHS. A helical transmembrane segment spans residues 202-220; the sequence is VWLQLLRVCRVLRSLKLFA. At 221 to 237 the chain is on the cytoplasmic side; sequence RFRQIKVILLALVRALK. The chain crosses the membrane as a helical span at residues 238-260; sequence SMTFLLMLLLIFFYIFAVTGVYF. The Extracellular portion of the chain corresponds to 261–279; it reads FREYSRSTIEGLEYNMFFS. An intramembrane region (helical; Pore-forming) is located at residues 280–292; sequence DLLNSLVTVFILF. Residues 293 to 312 are Extracellular-facing; that stretch reads TLDHWYAVLQDIWKVPESSR. Residues 313-339 traverse the membrane as a helical segment; the sequence is VFSSIYVILWLLLGSIIFRNIIVAMMV. Over 340-588 the chain is Cytoplasmic; the sequence is TNFQNIRSEL…VQALMSFEDK (249 aa). The segment at 376–512 is disordered; sequence SESLRGTSLG…YPVSHSISSH (137 aa). Positions 390–439 are enriched in acidic residues; sequence DIIETSDASDDDDDDDDDDDDDDDDDDDKSDATESDNEESDSENSESENS. Residues 440 to 502 show a composition bias toward basic and acidic residues; it reads ESEKIDPEKD…KVKEESKEKA (63 aa).

It belongs to the cation channel sperm-associated (TC 1.A.1.19) family. Component of the CatSper complex or CatSpermasome composed of the core pore-forming members CATSPER1, CATSPER2, CATSPER3 and CATSPER4 as well as auxiliary members CATSPERB, CATSPERG2, CATSPERD, CATSPERE, CATSPERZ, C2CD6/CATSPERT, SLCO6C1, TMEM249, TMEM262 and EFCAB9. HSPA1 may be an additional auxiliary complex member. The core complex members CATSPER1, CATSPER2, CATSPER3 and CATSPER4 form a heterotetrameric channel. The auxiliary CATSPERB, CATSPERG2, CATSPERD and CATSPERE subunits form a pavilion-like structure over the pore which stabilizes the complex through interactions with CATSPER4, CATSPER3, CATSPER1 and CATSPER2 respectively. SLCO6C1 interacts with CATSPERE and TMEM262/CATSPERH interacts with CATSPERB, further stabilizing the complex. C2CD6/CATSPERT interacts at least with CATSPERD and is required for targeting the CatSper complex in the flagellar membrane. Interacts with Ca(v)3.3/CACNA1I, leading to suppression of T-type calcium channel activity. Testis-specific.

The protein resides in the cell projection. The protein localises to the cilium. It localises to the flagellum membrane. The catalysed reaction is Ca(2+)(in) = Ca(2+)(out). In contrast to the human ortholog, not activated by progesterone. Activated by intracellular alkalinization. Functionally, pore-forming subunit of the CatSper complex, a sperm-specific voltage-gated calcium channel that plays a central role in sperm cell hyperactivation. Controls calcium entry to mediate the hyperactivated motility, a step needed for sperm motility which is essential late in the preparation of sperm for fertilization. In Mus musculus (Mouse), this protein is Cation channel sperm-associated protein 2 (Catsper2).